Here is a 280-residue protein sequence, read N- to C-terminus: Thymidylate synthase (280 aa).

Position 21 (R21) interacts with dUMP. (6R)-5,10-methylene-5,6,7,8-tetrahydrofolate is bound at residue H51. 142 to 143 contacts dUMP; it reads RR. Catalysis depends on C162, which acts as the Nucleophile. Residues 182–185, N193, and 223–225 contribute to the dUMP site; these read RSAD and HLY. A (6R)-5,10-methylene-5,6,7,8-tetrahydrofolate-binding site is contributed by D185. Position 279 (A279) interacts with (6R)-5,10-methylene-5,6,7,8-tetrahydrofolate.

The protein belongs to the thymidylate synthase family. Bacterial-type ThyA subfamily. In terms of assembly, homodimer.

It is found in the cytoplasm. It catalyses the reaction dUMP + (6R)-5,10-methylene-5,6,7,8-tetrahydrofolate = 7,8-dihydrofolate + dTMP. It functions in the pathway pyrimidine metabolism; dTTP biosynthesis. Catalyzes the reductive methylation of 2'-deoxyuridine-5'-monophosphate (dUMP) to 2'-deoxythymidine-5'-monophosphate (dTMP) while utilizing 5,10-methylenetetrahydrofolate (mTHF) as the methyl donor and reductant in the reaction, yielding dihydrofolate (DHF) as a by-product. This enzymatic reaction provides an intracellular de novo source of dTMP, an essential precursor for DNA biosynthesis. The chain is Thymidylate synthase from Acinetobacter baylyi (strain ATCC 33305 / BD413 / ADP1).